We begin with the raw amino-acid sequence, 418 residues long: MLKKDMNIADYDPQLFAAIEDETRRQEEHIELIASENYTSPRVIEAQGTQLTNKYAEGYPGKRYYGGCEHVDIVEELAISRAKELFGATYANVQPHSGSQANAAVFMALLEGGDTVLGMSLAHGGHLTHGSHVSFSGKLYNAVQYGIDESTGKIDYAEVERLAVEHKPKMIIAGFSAYSGIVDWGKFREIADKVGAYLFVDMAHVAGLVAAGIYPNPLPHAHVVTTTTHKTLAGPRGGLILSAIDDEAIYKKLNSAVFPGGQGGPLMHVIAAKAVAFKEALDPEFTTYQEQVVVNAKAMARTFIERGYDVVSGGTDNHLFLLDLISKDMTGKDADAALGNANITVNKNSVPNDPRSPFVTSGLRIGSPAITRRGFGEQESVLLTNWMCDVLDDISDLAVSERVKAQVLELCAKFPVYG.

Residues Leu121 and 125-127 each bind (6S)-5,6,7,8-tetrahydrofolate; that span reads GHL. The residue at position 230 (Lys230) is an N6-(pyridoxal phosphate)lysine. 356–358 provides a ligand contact to (6S)-5,6,7,8-tetrahydrofolate; sequence SPF.

The protein belongs to the SHMT family. In terms of assembly, homodimer. Requires pyridoxal 5'-phosphate as cofactor.

It is found in the cytoplasm. It catalyses the reaction (6R)-5,10-methylene-5,6,7,8-tetrahydrofolate + glycine + H2O = (6S)-5,6,7,8-tetrahydrofolate + L-serine. It functions in the pathway one-carbon metabolism; tetrahydrofolate interconversion. Its pathway is amino-acid biosynthesis; glycine biosynthesis; glycine from L-serine: step 1/1. Catalyzes the reversible interconversion of serine and glycine with tetrahydrofolate (THF) serving as the one-carbon carrier. This reaction serves as the major source of one-carbon groups required for the biosynthesis of purines, thymidylate, methionine, and other important biomolecules. Also exhibits THF-independent aldolase activity toward beta-hydroxyamino acids, producing glycine and aldehydes, via a retro-aldol mechanism. This chain is Serine hydroxymethyltransferase, found in Shewanella piezotolerans (strain WP3 / JCM 13877).